Here is a 309-residue protein sequence, read N- to C-terminus: Short chain dehydrogenase MYCFIDRAFT_6125 (309 aa).

NADP(+)-binding residues include I43, R67, D88, and R150. S168 functions as the Proton donor in the catalytic mechanism. Residues Y182, K186, V215, and S217 each coordinate NADP(+). The Proton acceptor role is filled by Y182. Catalysis depends on K186, which acts as the Lowers pKa of active site Tyr.

The protein belongs to the short-chain dehydrogenases/reductases (SDR) family.

It functions in the pathway secondary metabolite biosynthesis. In terms of biological role, short chain dehydrogenase; part of the gene cluster that mediates the biosynthesis of an emodin derivative that may be involved in black Sigatoka disease of banana. The pathway begins with the synthesis of atrochrysone thioester by the polyketide synthase PKS8-1. The atrochrysone carboxyl ACP thioesterase MYCFIDRAFT_190111 then breaks the thioester bond and releases the atrochrysone carboxylic acid from PKS8-1. The decarboxylase MYCFIDRAFT_34057 then catalyzes the concerted decarboxylation-elimination required to convert atochrysone carboxylic acid into emodin anthrone, which is further oxidized to emodin by the anthrone oxygenase MYCFIDRAFT_34418. The functions of the other tailoring enzymes as well as the final product of the cluster have still to be identified. The sequence is that of Short chain dehydrogenase MYCFIDRAFT_6125 from Pseudocercospora fijiensis (strain CIRAD86) (Black leaf streak disease fungus).